A 186-amino-acid chain; its full sequence is Putative 5'(3')-deoxyribonucleotidase (186 aa).

Aspartate 6 serves as the catalytic Nucleophile. Residues aspartate 6, aspartate 8, and aspartate 137 each coordinate Mg(2+). Aspartate 8 serves as the catalytic Proton donor.

The protein belongs to the 5'(3')-deoxyribonucleotidase family. The cofactor is Mg(2+).

In terms of biological role, dephosphorylates the 5' and 2'(3')-phosphates of deoxyribonucleotides. The polypeptide is Putative 5'(3')-deoxyribonucleotidase (Bordetella bronchiseptica (strain ATCC BAA-588 / NCTC 13252 / RB50) (Alcaligenes bronchisepticus)).